A 365-amino-acid polypeptide reads, in one-letter code: MLVPSDMIAAQSKMVYQMNKYCADRVQVRKAQIHKQIQEVCRIVQDVLKEVEVQEPRFISSLNDYNGRFQGLEVISPTEFEIIIYLNQMGVLNFVDDGTLPGCAVLKLSDGRKRSMSLWVEFITASGYLSARKIRSRFQTLVAQACDKCAYRDIVKMIADTTEVKLRIRERIIVQITPAFKCAGLWPRSASHWPLPGIPWPHPNIVAEVKTEGFNMLSKECIALQGKNSAMEGDAWVLSFTDAENRLLQGASRRRCLSILKTLRDRHLDLPGNPVTSYHLKTLLLYECEKHPREMEWEENCIADRINGIFLQLISCLQCRRCPHYFLPNMDLFKGKSPGALENAAKQVWRLTRIMLTNVRCLEEL.

Belongs to the mab-21 family.

The chain is Protein mab-21 (mab-21) from Drosophila melanogaster (Fruit fly).